The following is a 273-amino-acid chain: MTDKYAVFGNPIAQSKSPMIHTEFAKQTQQNMSYSAVLAPVEGFAASIKSFFASGGRGANVTAPFKEQAFSLCDELSELAQLAGAVNTLVRLEDGRLRGDNTDGLGLVADIERRLTSLKDKRVLLVGAGGAARGCILPLLQAGVAQLDITNRTHDKALQLAQLFSRYGNIKALTLTELASGYDVIINSSSAGLTGQLISLPSTIIDGTTYCYDMSYGSDTTLFNQWALSAGACHCCDGLGMLVGQAAQSFYLWRNVHPDATTVMQQLRDALGR.

Shikimate contacts are provided by residues 15–17 (SKS) and threonine 62. Lysine 66 serves as the catalytic Proton acceptor. Residue glutamate 78 participates in NADP(+) binding. Residues asparagine 87 and aspartate 103 each contribute to the shikimate site. NADP(+)-binding positions include 127–131 (GAGGA), 151–156 (NRTHDK), and methionine 214. Residue tyrosine 216 coordinates shikimate. Residue glycine 238 coordinates NADP(+).

It belongs to the shikimate dehydrogenase family. In terms of assembly, homodimer.

It catalyses the reaction shikimate + NADP(+) = 3-dehydroshikimate + NADPH + H(+). It participates in metabolic intermediate biosynthesis; chorismate biosynthesis; chorismate from D-erythrose 4-phosphate and phosphoenolpyruvate: step 4/7. Its function is as follows. Involved in the biosynthesis of the chorismate, which leads to the biosynthesis of aromatic amino acids. Catalyzes the reversible NADPH linked reduction of 3-dehydroshikimate (DHSA) to yield shikimate (SA). In Shewanella denitrificans (strain OS217 / ATCC BAA-1090 / DSM 15013), this protein is Shikimate dehydrogenase (NADP(+)).